The primary structure comprises 244 residues: Uridylate kinase (244 aa).

11 to 14 (KLSG) serves as a coordination point for ATP. Positions 19-24 (GSLGYG) are involved in allosteric activation by GTP. Gly-53 contributes to the UMP binding site. Gly-54 and Arg-58 together coordinate ATP. Residues Asp-73 and 134-141 (SGNPFFTT) contribute to the UMP site. Positions 161, 167, and 170 each coordinate ATP.

It belongs to the UMP kinase family. Homohexamer.

The protein resides in the cytoplasm. The enzyme catalyses UMP + ATP = UDP + ADP. The protein operates within pyrimidine metabolism; CTP biosynthesis via de novo pathway; UDP from UMP (UMPK route): step 1/1. Its activity is regulated as follows. Allosterically activated by GTP. Inhibited by UTP. Catalyzes the reversible phosphorylation of UMP to UDP. This is Uridylate kinase from Trichodesmium erythraeum (strain IMS101).